We begin with the raw amino-acid sequence, 100 residues long: Acylphosphatase (100 aa).

Positions arginine 3–phenylalanine 92 constitute an Acylphosphatase-like domain. Catalysis depends on residues arginine 18 and asparagine 36. Positions aspartate 76 to glutamate 100 are disordered.

The protein belongs to the acylphosphatase family.

The enzyme catalyses an acyl phosphate + H2O = a carboxylate + phosphate + H(+). The sequence is that of Acylphosphatase (acyP) from Nitratidesulfovibrio vulgaris (strain ATCC 29579 / DSM 644 / CCUG 34227 / NCIMB 8303 / VKM B-1760 / Hildenborough) (Desulfovibrio vulgaris).